A 397-amino-acid polypeptide reads, in one-letter code: tRNA(Ile)-lysidine synthase (397 aa).

44-49 lines the ATP pocket; that stretch reads SGGADS.

Belongs to the tRNA(Ile)-lysidine synthase family.

Its subcellular location is the cytoplasm. The enzyme catalyses cytidine(34) in tRNA(Ile2) + L-lysine + ATP = lysidine(34) in tRNA(Ile2) + AMP + diphosphate + H(+). Ligates lysine onto the cytidine present at position 34 of the AUA codon-specific tRNA(Ile) that contains the anticodon CAU, in an ATP-dependent manner. Cytidine is converted to lysidine, thus changing the amino acid specificity of the tRNA from methionine to isoleucine. This is tRNA(Ile)-lysidine synthase from Rhodopirellula baltica (strain DSM 10527 / NCIMB 13988 / SH1).